Consider the following 1727-residue polypeptide: Nucleoporin alm1 (1727 aa).

7 coiled-coil regions span residues 57 to 361 (QEVN…KNTS), 443 to 463 (NFLS…QAEL), 542 to 740 (IKEA…AEEL), 804 to 1106 (AARK…INES), 1223 to 1427 (GERS…QLNK), 1497 to 1555 (NEEE…AESA), and 1601 to 1664 (QKEW…KKDS). Over residues 1423 to 1448 (EQLNKPSATPTATTQSEPSTVSLEEF) the composition is skewed to polar residues. Disordered regions lie at residues 1423–1459 (EQLN…SSTQ), 1477–1500 (EKVR…NEEE), and 1656–1727 (LEQS…KKAK). 2 stretches are compositionally biased toward polar residues: residues 1672-1684 (ASKN…SNSE) and 1702-1714 (VDTN…SSSD). S1706 is modified (phosphoserine).

It localises to the nucleus. The protein localises to the nuclear pore complex. It is found in the nucleus envelope. Maintains the proteasome and its anchor cut8 at the nucleus envelope and is required for kinetochore component proteostasis. Proper kinetochore stoichiometry ensures the correct attachment of kinetochores to spindle microtubules during cytokinesis. Required for the localization of spindle assembly checkpoint (SAC) protein mad2 and bub1 to the nucleus envelope during interphase, but not their localization during mitosis. The polypeptide is Nucleoporin alm1 (Schizosaccharomyces pombe (strain 972 / ATCC 24843) (Fission yeast)).